Reading from the N-terminus, the 258-residue chain is Type III pantothenate kinase (258 aa).

An ATP-binding site is contributed by 6–13; that stretch reads DVGNTQIF. Residue 107 to 110 coordinates substrate; the sequence is GADR. Asp-109 (proton acceptor) is an active-site residue. Residue Asp-130 coordinates K(+). Residue Thr-133 coordinates ATP. Residue Thr-185 coordinates substrate.

It belongs to the type III pantothenate kinase family. In terms of assembly, homodimer. It depends on NH4(+) as a cofactor. K(+) is required as a cofactor.

It localises to the cytoplasm. It carries out the reaction (R)-pantothenate + ATP = (R)-4'-phosphopantothenate + ADP + H(+). It participates in cofactor biosynthesis; coenzyme A biosynthesis; CoA from (R)-pantothenate: step 1/5. Catalyzes the phosphorylation of pantothenate (Pan), the first step in CoA biosynthesis. The polypeptide is Type III pantothenate kinase (Elusimicrobium minutum (strain Pei191)).